A 332-amino-acid chain; its full sequence is NADH-quinone oxidoreductase subunit H (332 aa).

Transmembrane regions (helical) follow at residues 8–28 (IIEC…LAGF), 44–66 (IGPN…KLFA), 78–98 (PIFI…MAPI), 120–140 (VGIL…LLAG), 157–177 (IQFL…LMII), 196–216 (WLIF…YVEL), 245–265 (MFFI…SLVF), 274–294 (FIPG…LFMW), and 312–332 (WKIM…ILLF).

Belongs to the complex I subunit 1 family. As to quaternary structure, NDH-1 is composed of 14 different subunits. Subunits NuoA, H, J, K, L, M, N constitute the membrane sector of the complex.

It localises to the cell inner membrane. It carries out the reaction a quinone + NADH + 5 H(+)(in) = a quinol + NAD(+) + 4 H(+)(out). Its function is as follows. NDH-1 shuttles electrons from NADH, via FMN and iron-sulfur (Fe-S) centers, to quinones in the respiratory chain. The immediate electron acceptor for the enzyme in this species is believed to be ubiquinone. Couples the redox reaction to proton translocation (for every two electrons transferred, four hydrogen ions are translocated across the cytoplasmic membrane), and thus conserves the redox energy in a proton gradient. This subunit may bind ubiquinone. In Helicobacter hepaticus (strain ATCC 51449 / 3B1), this protein is NADH-quinone oxidoreductase subunit H.